The chain runs to 391 residues: MDQFIKQDETGDLIETGMNVANHFLSAPIQGTNSLSKASIIPGVAPVLIGNPEQKNIQHPTASHQGSKSKGRGSGVRSIIVPPSEAGNGGTQIPEPLFAQTGQGGIVTTVYQDPTIQPTGSYRSVELTKIGKERMINRFVEKPRISTPVTEFKRGGPGAAAQGQTIQEEGIDGNGASAGSKERSGSLSGATLYAHLSLPQQDSTPANVGIAPQSAISANEIMDLLRGMDARLQHLEQKVDKVLAQGSMVTQIKNELSTVKTTLATIEGMMATVKIMDPGNPTGVPVDELRRSFSDHVTIVSGPGDVSFSSSEEPTLYLDELARPVSKPRPAKQTKPQPVKDLAGRKVMITKMITDCVANPQMKQAFEQRLAKASTEDALNDIKRDIIRSAI.

2 positions are modified to phosphothreonine: Thr-10 and Thr-16. Residues 54–65 (QKNIQHPTASHQ) are compositionally biased toward polar residues. Disordered regions lie at residues 54 to 98 (QKNI…EPLF) and 148 to 184 (PVTEFKRGGPGAAAQGQTIQEEGIDGNGASAGSKERS). Position 69 is a phosphoserine (Ser-69). 3 positions are modified to phosphothreonine: Thr-91, Thr-150, and Thr-165. Position 188 is a phosphoserine (Ser-188). Residues 216 to 279 (ISANEIMDLL…MATVKIMDPG (64 aa)) form a multimerization region. The stretch at 218–245 (ANEIMDLLRGMDARLQHLEQKVDKVLAQ) forms a coiled coil. At Thr-250 the chain carries Phosphothreonine. A Phosphoserine modification is found at Ser-257. Phosphothreonine is present on residues Thr-258 and Thr-282. Ser-292 and Ser-294 each carry phosphoserine. The residue at position 298 (Thr-298) is a Phosphothreonine. Residues Ser-301 and Ser-374 each carry the phosphoserine modification. The segment at 343–391 (AGRKVMITKMITDCVANPQMKQAFEQRLAKASTEDALNDIKRDIIRSAI) is interaction with the nucleoprotein. Residue Thr-375 is modified to Phosphothreonine.

The protein belongs to the rubulavirus/avulavirus P protein family. Homotetramer. Interacts (via multimerization domain) with polymerase L; this interaction forms the polymerase L-P complex. Interacts (via N-terminus) with N0 (via Ncore); this interaction allows P to chaperon N0 to avoid N polymerization before encapsidation. Interacts (via C-terminus) with N-RNA template; this interaction positions the polymerase on the template for both transcription and replication. Interacts with host RPS6KB1 kinase; this interaction may play a role in the viral replication and transcription.

Functionally, essential cofactor of the RNA polymerase L that plays a central role in the transcription and replication by forming the polymerase complex with RNA polymerase L and recruiting L to the genomic N-RNA template for RNA synthesis. Also plays a central role in the encapsidation of nascent RNA chains by forming the encapsidation complex with the nucleocapsid protein N (N-P complex). Acts as a chaperone for newly synthesized free N protein, so-called N0, allowing encapsidation of nascent RNA chains during replication. The nucleoprotein protein N prevents excessive phosphorylation of P, which leads to down-regulation of viral transcription/ replication. Participates, together with N, in the formation of viral factories (viroplasms), which are large inclusions in the host cytoplasm where replication takes place. In Mumps virus (strain Enders) (MuV), this protein is Phosphoprotein.